The following is a 613-amino-acid chain: Forkhead box protein O (613 aa).

Disordered stretches follow at residues 39–90 (RARS…KNSS), 182–205 (KSVR…RAKK), 217–269 (GLND…RLSP), and 317–360 (QGFS…PASG). Residue threonine 44 is modified to Phosphothreonine; by PKB/AKT1. Positions 63–80 (TKASNQQLAPGDSQQAIQ) are enriched in polar residues. Position 75 is a phosphoserine (serine 75). Residues 81 to 90 (NANAAKKNSS) show a composition bias toward low complexity. The fork-head DNA-binding region spans 95–201 (WGNLSYADLI…ETSRYEKRRG (107 aa)). At serine 190 the chain carries Phosphoserine; by PKB/AKT1. Composition is skewed to polar residues over residues 221–230 (ATPSPSSSVS) and 256–265 (RASSNASSCG). At serine 259 the chain carries Phosphoserine; by PKB/AKT1. Phosphoserine is present on residues serine 262, serine 263, and serine 268. The span at 327 to 336 (SQPPPPPYQP) shows a compositional bias: pro residues. Positions 337-353 (PQHQQAQQQQQQQSPYA) are enriched in low complexity.

Interacts with melt.

It localises to the cytoplasm. Its subcellular location is the nucleus. In terms of biological role, transcription factor involved in the regulation of the insulin signaling pathway. Consistently activates both the downstream target Thor\d4EBP and the feedback control target InR. Involved in negative regulation of the cell cycle, modulating cell growth and proliferation. In response to cellular stresses, such as nutrient deprivation or increased levels of reactive oxygen species, foxo is activated and inhibits growth through the action of target genes such as Thor. Foxo activated in the adult fat body can regulate lifespan in adults; an insulin peptide itself may function as one secondary messenger of insulin-regulated aging. Also regulates Lip4, homolog of human acid lipases, thereby acting as a key modulator of lipid metabolism by insulin signaling and integrates insulin responses to glucose and lipid homeostasis. This chain is Forkhead box protein O, found in Drosophila melanogaster (Fruit fly).